The primary structure comprises 399 residues: Probable inactive 2-oxoglutarate-dependent dioxygenase AOP2 (399 aa).

In terms of domain architecture, Fe2OG dioxygenase spans 248-345 (GGDDVEANDD…RYTAAIFTCP (98 aa)). His268, Asp270, and His325 together coordinate Fe cation. Residue Arg336 participates in 2-oxoglutarate binding.

The protein belongs to the iron/ascorbate-dependent oxidoreductase family. The cofactor is Fe(2+).

The protein is Probable inactive 2-oxoglutarate-dependent dioxygenase AOP2 (AOP2) of Arabidopsis thaliana (Mouse-ear cress).